The following is an 820-amino-acid chain: Nuclear pore complex protein Nup93 (820 aa).

It belongs to the nucleoporin interacting component (NIC) family.

It is found in the nucleus membrane. Its subcellular location is the nucleus. It localises to the nuclear pore complex. In terms of biological role, plays a role in the nuclear pore complex (NPC) assembly and/or maintenance. This Danio rerio (Zebrafish) protein is Nuclear pore complex protein Nup93 (dye).